A 424-amino-acid chain; its full sequence is Tyrosine--tRNA ligase (424 aa).

Tyr33 provides a ligand contact to L-tyrosine. A 'HIGH' region motif is present at residues 38–47 (PSADSLHIGH). Residues Tyr170 and Gln174 each contribute to the L-tyrosine site. The short motif at 230 to 234 (KFGKT) is the 'KMSKS' region element. Lys233 is an ATP binding site. Residues 357–424 (MSLIDALVRC…RRHYHLIRLV (68 aa)) form the S4 RNA-binding domain.

This sequence belongs to the class-I aminoacyl-tRNA synthetase family. TyrS type 1 subfamily. As to quaternary structure, homodimer.

The protein resides in the cytoplasm. It carries out the reaction tRNA(Tyr) + L-tyrosine + ATP = L-tyrosyl-tRNA(Tyr) + AMP + diphosphate + H(+). Functionally, catalyzes the attachment of tyrosine to tRNA(Tyr) in a two-step reaction: tyrosine is first activated by ATP to form Tyr-AMP and then transferred to the acceptor end of tRNA(Tyr). In Roseiflexus castenholzii (strain DSM 13941 / HLO8), this protein is Tyrosine--tRNA ligase.